Reading from the N-terminus, the 149-residue chain is Bis(5'-adenosyl)-triphosphatase (149 aa).

Positions 2 to 109 constitute an HIT domain; sequence SFRFGQHLIK…LPRKAGDFHR (108 aa). Residues histidine 8, asparagine 27, glutamine 83, and 89–92 contribute to the substrate site; that span reads GQTV. The Histidine triad motif motif lies at 94–98; that stretch reads HVHVH. Histidine 96 functions as the Tele-AMP-histidine intermediate in the catalytic mechanism. Histidine 98 is a substrate binding site. Residues tyrosine 114 and tyrosine 147 each carry the phosphotyrosine modification.

As to quaternary structure, homodimer. Interacts with UBE2I. Interacts with MDM2. Interacts with CTNNB1. Identified in a complex with CTNNB1 and LEF1. Post-translationally, phosphorylation at Tyr-114 by SRC is required for induction of apoptosis. As to expression, expressed in the brain, kidney, spleen, testis and lung.

The protein resides in the cytoplasm. It is found in the nucleus. Its subcellular location is the mitochondrion. The catalysed reaction is P(1),P(3)-bis(5'-adenosyl) triphosphate + H2O = AMP + ADP + 2 H(+). It catalyses the reaction adenosine 5'-phosphosulfate + H2O = sulfate + AMP + 2 H(+). It carries out the reaction adenosine 5'-phosphosulfate + NH4(+) = adenosine 5'-phosphoramidate + sulfate + 2 H(+). The enzyme catalyses adenosine 5'-phosphoramidate + H2O = AMP + NH4(+). Functionally, possesses dinucleoside triphosphate hydrolase activity. Cleaves P(1)-P(3)-bis(5'-adenosyl) triphosphate (Ap3A) to yield AMP and ADP. Can also hydrolyze P(1)-P(4)-bis(5'-adenosyl) tetraphosphate (Ap4A), but has extremely low activity with ATP. Exhibits adenylylsulfatase activity, hydrolyzing adenosine 5'-phosphosulfate to yield AMP and sulfate. Exhibits adenosine 5'-monophosphoramidase activity, hydrolyzing purine nucleotide phosphoramidates with a single phosphate group such as adenosine 5'monophosphoramidate (AMP-NH2) to yield AMP and NH2. Exhibits adenylylsulfate-ammonia adenylyltransferase, catalyzing the ammonolysis of adenosine 5'-phosphosulfate resulting in the formation of adenosine 5'-phosphoramidate. Also catalyzes the ammonolysis of adenosine 5-phosphorofluoridate and diadenosine triphosphate. Modulates transcriptional activation by CTNNB1 and thereby contributes to regulate the expression of genes essential for cell proliferation and survival, such as CCND1 and BIRC5. Plays a role in the induction of apoptosis via SRC and AKT1 signaling pathways. Inhibits MDM2-mediated proteasomal degradation of p53/TP53 and thereby plays a role in p53/TP53-mediated apoptosis. Induction of apoptosis depends on the ability of FHIT to bind P(1)-P(3)-bis(5'-adenosyl) triphosphate or related compounds, but does not require its catalytic activity Functions as a tumor suppressor. This Bos taurus (Bovine) protein is Bis(5'-adenosyl)-triphosphatase (FHIT).